Consider the following 775-residue polypeptide: Venom dipeptidyl peptidase 4 (775 aa).

Positions 1–23 are cleaved as a signal peptide; the sequence is MEVLVQLALLLVVHGSLVVLVAG. N-linked (GlcNAc...) asparagine glycans are attached at residues Asn-68 and Asn-239. Intrachain disulfides connect Cys-450-Cys-453 and Cys-463-Cys-481. N-linked (GlcNAc...) asparagine glycans are attached at residues Asn-473, Asn-505, Asn-578, and Asn-631. Residue Ser-639 is the Charge relay system of the active site. Residues Cys-659 and Cys-770 are joined by a disulfide bond. Residues Asn-689 and Asn-694 are each glycosylated (N-linked (GlcNAc...) asparagine). Residues Asp-718 and His-750 each act as charge relay system in the active site.

The protein belongs to the peptidase S9B family. DPPIV subfamily. As to expression, expressed by the venom duct.

The protein localises to the secreted. The enzyme catalyses Release of an N-terminal dipeptide, Xaa-Yaa-|-Zaa-, from a polypeptide, preferentially when Yaa is Pro, provided Zaa is neither Pro nor hydroxyproline.. Its activity is regulated as follows. Inhibited by diprotin A. Its function is as follows. Venom dipeptidyl-peptidase which removes N-terminal dipeptides sequentially from polypeptides having unsubstituted N-termini provided that the penultimate residue is proline. May process promelittin into its active form and/or modulate the chemotactic activity of immune cells after the insect sting. In Apis mellifera (Honeybee), this protein is Venom dipeptidyl peptidase 4.